Consider the following 158-residue polypeptide: Probable transcription regulator ArfM (158 aa).

Functionally, activates, in anaerobic conditions, the transcription of the fermentative operons lctEP and alsDS, of the hmp gene encoding a flavohemoglobin-like protein, the nitrite reductase operon nasDE and the heme biosynthesis genes hemN and hemZ. The polypeptide is Probable transcription regulator ArfM (arfM) (Bacillus subtilis (strain 168)).